A 412-amino-acid chain; its full sequence is Argininosuccinate synthase (412 aa).

Residues 10–18 (AYSGGLDTS) and A36 contribute to the ATP site. Y87 and S92 together coordinate L-citrulline. Y87 carries the post-translational modification Phosphotyrosine. An N6-acetyllysine modification is found at K112. Phosphotyrosine is present on Y113. An ATP-binding site is contributed by 115–123 (SHGATGKGN). The L-aspartate site is built by T119, N123, and D124. Residue N123 participates in L-citrulline binding. R127 contributes to the L-citrulline binding site. 2 positions are modified to N6-acetyllysine; by CLOCK: K165 and K176. Positions 180 and 189 each coordinate L-citrulline. A Phosphoserine modification is found at S180. T219 bears the Phosphothreonine mark. 2 residues coordinate L-citrulline: E270 and Y282.

It belongs to the argininosuccinate synthase family. Type 1 subfamily. Homotetramer. Interacts with NMRAL1. Interacts with CLOCK; in a circadian manner. Forms tissue-specific complexes with ASL, SLC7A1, HSP90AA1 and nitric oxide synthase NOS1, NOS2 or NOS3; the complex regulates cell-autonomous L-arginine synthesis and citrulline recycling while channeling extracellular L-arginine to nitric oxide synthesis pathway. In terms of processing, acetylated by CLOCK in a circadian manner which negatively regulates its enzyme activity. Deacetylated by histone deacetylases. As to expression, expressed in adult liver.

It localises to the cytoplasm. Its subcellular location is the cytosol. The catalysed reaction is L-citrulline + L-aspartate + ATP = 2-(N(omega)-L-arginino)succinate + AMP + diphosphate + H(+). It participates in amino-acid biosynthesis; L-arginine biosynthesis; L-arginine from L-ornithine and carbamoyl phosphate: step 2/3. The protein operates within nitrogen metabolism; urea cycle; (N(omega)-L-arginino)succinate from L-aspartate and L-citrulline: step 1/1. In terms of biological role, one of the enzymes of the urea cycle, the metabolic pathway transforming neurotoxic amonia produced by protein catabolism into inocuous urea in the liver of ureotelic animals. Catalyzes the formation of arginosuccinate from aspartate, citrulline and ATP and together with ASL it is responsible for the biosynthesis of arginine in most body tissues. The polypeptide is Argininosuccinate synthase (Homo sapiens (Human)).